Consider the following 301-residue polypeptide: uncharacterized protein (301 aa).

Residues Ser44 and Tyr107 each act as charge relay system in the active site. The active-site Proton donor is Tyr133. The active-site Schiff-base intermediate with substrate is the Lys162.

It belongs to the DapA family. Homotetramer.

It is found in the cytoplasm. This is an uncharacterized protein from Pyrobaculum aerophilum (strain ATCC 51768 / DSM 7523 / JCM 9630 / CIP 104966 / NBRC 100827 / IM2).